A 162-amino-acid polypeptide reads, in one-letter code: uncharacterized protein (162 aa).

3 helical membrane-spanning segments follow: residues 28–50 (ALAL…VCFF), 57–76 (LLLL…DPWL), and 108–130 (YNTM…YALA).

The protein resides in the cell membrane. This is an uncharacterized protein from Treponema pallidum (strain Nichols).